Consider the following 318-residue polypeptide: Pyrimidine-specific ribonucleoside hydrolase RihA (318 aa).

Histidine 240 is an active-site residue.

This sequence belongs to the IUNH family. RihA subfamily.

Its function is as follows. Hydrolyzes cytidine or uridine to ribose and cytosine or uracil, respectively. This chain is Pyrimidine-specific ribonucleoside hydrolase RihA, found in Shewanella sp. (strain MR-7).